The following is a 465-amino-acid chain: GTPase Der (465 aa).

2 EngA-type G domains span residues 3 to 167 (PLVA…PEEG) and 179 to 352 (VRIA…ASAT). GTP-binding positions include 9–16 (GRPNVGKS), 57–61 (DTGGI), 119–122 (NKID), 185–192 (GRPNVGKS), 232–236 (DTAGL), and 297–300 (NKWD). Residues 353 to 437 (HEFSTSEVNQ…PVRFIFREGA (85 aa)) enclose the KH-like domain.

The protein belongs to the TRAFAC class TrmE-Era-EngA-EngB-Septin-like GTPase superfamily. EngA (Der) GTPase family. Associates with the 50S ribosomal subunit.

Functionally, GTPase that plays an essential role in the late steps of ribosome biogenesis. The protein is GTPase Der of Xanthomonas campestris pv. campestris (strain 8004).